Here is a 266-residue protein sequence, read N- to C-terminus: Nitrate import ATP-binding protein NrtD (266 aa).

Residues L3–Y234 form the ABC transporter domain. G39–S46 lines the ATP pocket.

Belongs to the ABC transporter superfamily. Nitrate/nitrite/cyanate uptake transporter (NitT) (TC 3.A.1.16) family. The complex is composed of two ATP-binding proteins (NrtC and NrtD), two transmembrane proteins (NrtB) and a solute-binding protein (NrtA).

It is found in the cell inner membrane. The catalysed reaction is nitrate(out) + ATP + H2O = nitrate(in) + ADP + phosphate + H(+). Part of the ABC transporter complex NrtABCD involved in nitrate uptake. The complex is probably also involved in nitrite transport. Probably responsible for energy coupling to the transport system. The chain is Nitrate import ATP-binding protein NrtD (nrtD) from Synechocystis sp. (strain ATCC 27184 / PCC 6803 / Kazusa).